The chain runs to 411 residues: Squalene synthase (411 aa).

2 helical membrane passes run 281–301 and 388–408; these read SIFR…AMCY and SPVL…QLSG.

It belongs to the phytoene/squalene synthase family. Requires Mg(2+) as cofactor.

It is found in the endoplasmic reticulum membrane. The enzyme catalyses 2 (2E,6E)-farnesyl diphosphate + NADPH + H(+) = squalene + 2 diphosphate + NADP(+). It catalyses the reaction 2 (2E,6E)-farnesyl diphosphate + NADH + H(+) = squalene + 2 diphosphate + NAD(+). The protein operates within terpene metabolism; lanosterol biosynthesis; lanosterol from farnesyl diphosphate: step 1/3. The chain is Squalene synthase from Nicotiana benthamiana.